Reading from the N-terminus, the 173-residue chain is Phosphopantetheine adenylyltransferase (173 aa).

Thr9 is a substrate binding site. ATP contacts are provided by residues 9 to 10 (TF) and His17. The substrate site is built by Lys41, Thr75, and Arg89. ATP is bound by residues 90–92 (GLR), Glu100, and 125–131 (HIYLSSS).

It belongs to the bacterial CoaD family. Homohexamer. It depends on Mg(2+) as a cofactor.

The protein localises to the cytoplasm. The catalysed reaction is (R)-4'-phosphopantetheine + ATP + H(+) = 3'-dephospho-CoA + diphosphate. It functions in the pathway cofactor biosynthesis; coenzyme A biosynthesis; CoA from (R)-pantothenate: step 4/5. In terms of biological role, reversibly transfers an adenylyl group from ATP to 4'-phosphopantetheine, yielding dephospho-CoA (dPCoA) and pyrophosphate. The protein is Phosphopantetheine adenylyltransferase of Methylacidiphilum infernorum (isolate V4) (Methylokorus infernorum (strain V4)).